The following is a 140-amino-acid chain: Nucleoside diphosphate kinase (140 aa).

The ATP site is built by K11, F59, R87, T93, R104, and N114. The Pros-phosphohistidine intermediate role is filled by H117.

The protein belongs to the NDK family. As to quaternary structure, homotetramer. Mg(2+) is required as a cofactor.

It is found in the cytoplasm. The enzyme catalyses a 2'-deoxyribonucleoside 5'-diphosphate + ATP = a 2'-deoxyribonucleoside 5'-triphosphate + ADP. It carries out the reaction a ribonucleoside 5'-diphosphate + ATP = a ribonucleoside 5'-triphosphate + ADP. Major role in the synthesis of nucleoside triphosphates other than ATP. The ATP gamma phosphate is transferred to the NDP beta phosphate via a ping-pong mechanism, using a phosphorylated active-site intermediate. This chain is Nucleoside diphosphate kinase, found in Methylobacterium nodulans (strain LMG 21967 / CNCM I-2342 / ORS 2060).